A 292-amino-acid chain; its full sequence is Ribosomal protein L11 methyltransferase (292 aa).

Threonine 143, glycine 164, aspartate 186, and asparagine 227 together coordinate S-adenosyl-L-methionine.

This sequence belongs to the methyltransferase superfamily. PrmA family.

Its subcellular location is the cytoplasm. It carries out the reaction L-lysyl-[protein] + 3 S-adenosyl-L-methionine = N(6),N(6),N(6)-trimethyl-L-lysyl-[protein] + 3 S-adenosyl-L-homocysteine + 3 H(+). Its function is as follows. Methylates ribosomal protein L11. This chain is Ribosomal protein L11 methyltransferase, found in Hahella chejuensis (strain KCTC 2396).